We begin with the raw amino-acid sequence, 217 residues long: Small ribosomal subunit protein uS3 (217 aa).

Positions 40–110 (IRDLINNSFN…EVYINIHEVR (71 aa)) constitute a KH type-2 domain.

Belongs to the universal ribosomal protein uS3 family. In terms of assembly, part of the 30S ribosomal subunit. Forms a tight complex with proteins S10 and S14.

Binds the lower part of the 30S subunit head. Binds mRNA in the 70S ribosome, positioning it for translation. The chain is Small ribosomal subunit protein uS3 from Rickettsia canadensis (strain McKiel).